A 160-amino-acid chain; its full sequence is Transcription elongation factor GreA (160 aa).

A coiled-coil region spans residues 49–73 (HAAKEEQSHNEGRIADLEDKLARAD).

This sequence belongs to the GreA/GreB family.

Its function is as follows. Necessary for efficient RNA polymerase transcription elongation past template-encoded arresting sites. The arresting sites in DNA have the property of trapping a certain fraction of elongating RNA polymerases that pass through, resulting in locked ternary complexes. Cleavage of the nascent transcript by cleavage factors such as GreA or GreB allows the resumption of elongation from the new 3'terminus. GreA releases sequences of 2 to 3 nucleotides. This is Transcription elongation factor GreA from Rhodopseudomonas palustris (strain BisA53).